Here is a 205-residue protein sequence, read N- to C-terminus: Syndecan 4-B (205 aa).

The N-terminal stretch at 1–17 is a signal peptide; sequence MNRLLLLLALVLSGVAA. Over 18-162 the chain is Extracellular; the sequence is ESIRETETMD…FFQRTEVIVA (145 aa). The tract at residues 26-113 is disordered; the sequence is MDPTSMLEYE…HDFDETKTGR (88 aa). Residues S37, S73, and S75 are each glycosylated (O-linked (Xyl...) (glycosaminoglycan) serine). The span at 44-94 shows a compositional bias: acidic residues; the sequence is VFVDEDDDDDYEDGVDYEIDSESDNDEDYSGSGDDDFDDEDNVEDEDEEET. Residues 102 to 113 show a composition bias toward basic and acidic residues; sequence PEHDFDETKTGR. The helical transmembrane segment at 163 to 183 threads the bilayer; sequence IIAGTLVGLVVAVSFIVFLVI. Topologically, residues 184–205 are cytoplasmic; sequence RRNQNGDLVKKPIYKKTSTMEV.

This sequence belongs to the syndecan proteoglycan family. As to quaternary structure, interacts with the Wnt receptor fzd7 and its signal transducer dvl2/dsh. Post-translationally, O-glycosylated; contains both chondroitin sulfate and heparan sulfate. Ser-37, Ser-73 and Ser-75 can all be modified by either chondroitin sulfate or heparan sulfate, and the protein exists in forms that contain only chondroitin sulfate, only heparan sulfate and both chondroitin sulfate and heparan sulfate. Expressed in the animal hemisphere from the 4-cell to the blastula stage. During gastrulation, expressed in the involuting dorsal mesoderm and ectoderm. After involution, localized mainly to the anterior neuroectoderm. At later stages, expressed in the brain, branchial arches, pronephros, tailbud, and at low levels in the somites.

The protein localises to the membrane. Functionally, cell surface proteoglycan. Regulates non-canonical Wnt signaling, being necessary and sufficient for fibronectrin-mediated translocation of dvl2/dsh to the plasma membrane. Required for proper convergent extension movements during gastrulation, which shape the neural plate, and for subsequent neural tube closure. This is Syndecan 4-B (sdc4-b) from Xenopus laevis (African clawed frog).